The sequence spans 531 residues: MRLIFVLLATFVNAAFSYKILVFSPATSKSHLISNGRLADELARAGHDVTVLELDFLGISQTTNSVKVAKKRIIDGFQESTNFKNVLHGFSETVMEEPSFTDEIKGWWAYQNVYNDLCAEFLKMDDIFNELKNAKFDGFFAEQINLCGFGYAHALEIPRHFLISSCPFAAPVYDFTGLPMPTSTVAFAADLSISPTYTERARNLFVAVLTKLEFTLLNNRLQAHFQHKFGEHFPSLYSVTSDVDVIFVATDEIIDISTTTLQNIVHVGGLGVDDDVAEMDNVFASEMSKGKEGVIYFSLGTIANTTKIDSKVMRTVLDIVKKFPDYHFVIRADKYDLSTREYAKSVSNAFVSDWLPQPAILHHPRLKLFITHSGYNSIVEAARAGVPLINIPFMFDQNLNSRAVEKKGWGIRRHKKQLLTEPEEIEKAISEIIHNKKYSLKAQRIRDLIKSKPLSSSQLLIKTTEWAIKNHGLDEIKFESRGQTTWTYYNLDVIIPVFWLSISLVIPTIFGWYKFSCFGHVEEKKGKSKRD.

Positions 1–17 (MRLIFVLLATFVNAAFS) are cleaved as a signal peptide. Residue N304 is glycosylated (N-linked (GlcNAc...) asparagine). A helical membrane pass occupies residues 493-513 (VIIPVFWLSISLVIPTIFGWY).

Belongs to the UDP-glycosyltransferase family.

It is found in the membrane. The catalysed reaction is glucuronate acceptor + UDP-alpha-D-glucuronate = acceptor beta-D-glucuronoside + UDP + H(+). The chain is Putative UDP-glucuronosyltransferase ugt-46 (ugt-46) from Caenorhabditis elegans.